The sequence spans 319 residues: MLRYCLHRLLIGLGMLLALTILIFVLLQLTPGDPIDAYINPNVAMTQAEMDALRAQLGLDRPLPVQYLAWLGQAVQGNLGHSLQRFNETVSGLIASRIGPTLLLMAAGLAIAIVIGVTTGIISAVRRNSFPDYSFSVLALLGISSPAFLTALLGLYVFSVRLKWAPSGGMLTPATDFSIPDLLRHLALPALVLSIGHAALIMRYMRSSMLETLNQDYVRTARAKGVREFWVVVKHTLRNAMLPVVTLIGSTIGLAVGGAIFIESVFNWPGMGLLLINAVETRDYPVIMGATLVIGACVIIVNILTDLAYAVIDPRIKVT.

6 helical membrane-spanning segments follow: residues 9–29 (LLIGLGMLLALTILIFVLLQL), 102–122 (LLLMAAGLAIAIVIGVTTGII), 138–158 (LALLGISSPAFLTALLGLYVF), 182–202 (LLRHLALPALVLSIGHAALIM), 242–262 (LPVVTLIGSTIGLAVGGAIFI), and 284–304 (YPVIMGATLVIGACVIIVNIL). Positions 98–305 (IGPTLLLMAA…ACVIIVNILT (208 aa)) constitute an ABC transmembrane type-1 domain.

It belongs to the binding-protein-dependent transport system permease family. The complex is composed of two ATP-binding proteins (BOV_A0347 and BOV_A0348), two transmembrane proteins (BOV_A0350 and BOV_A0351) and a solute-binding protein (BOV_A0352).

The protein resides in the cell inner membrane. Functionally, probably part of an ABC transporter complex that could be involved in peptide import. Probably responsible for the translocation of the substrate across the membrane. This is Putative peptide permease protein BOV_A0351 from Brucella ovis (strain ATCC 25840 / 63/290 / NCTC 10512).